The sequence spans 246 residues: ATP synthase subunit a, chloroplastic (246 aa).

5 consecutive transmembrane segments (helical) span residues 35 to 55, 94 to 114, 132 to 152, 198 to 218, and 219 to 239; these read AQVLITSWIVIGLILGLTFLA, IPFIGTMFLFIFVSNWSGALI, DINTTVALALLTSVAYFYAGL, LVVAVLVSLVPLVVPIPMMFL, and GLFTSAIQALIFATLAAAYIG.

Belongs to the ATPase A chain family. As to quaternary structure, F-type ATPases have 2 components, CF(1) - the catalytic core - and CF(0) - the membrane proton channel. CF(1) has five subunits: alpha(3), beta(3), gamma(1), delta(1), epsilon(1). CF(0) has four main subunits: a, b, b' and c.

It localises to the plastid. It is found in the chloroplast thylakoid membrane. Functionally, key component of the proton channel; it plays a direct role in the translocation of protons across the membrane. In Chara vulgaris (Common stonewort), this protein is ATP synthase subunit a, chloroplastic.